The following is a 523-amino-acid chain: Probable endopeptidase p60 (523 aa).

The first 27 residues, 1–27 (MNMKKATIAATAGIAVTAFAAPTIASA), serve as a signal peptide directing secretion. One can recognise a LysM 1 domain in the interval 28-71 (STVVVEAGDTLWGIAQDNGTTVDALKKANKLTTDKIVPGQKLQV). Residues 78 to 142 (KTEKSVSATW…VNGKYLGNAV (65 aa)) enclose the SH3b domain. The tract at residues 146 to 188 (PSATPEVKQEETTQAAPAQQTKTEVKQATPAATTEKDAVETKT) is disordered. The span at 157-167 (TTQAAPAQQTK) shows a compositional bias: low complexity. Positions 198–241 (TTHTVKSGDTIWALSVKYGASVQDLMSWNNLSSSSIYVGQNIAV) constitute a LysM 2 domain. Low complexity-rich tracts occupy residues 251–282 (PKAE…TTTT) and 290–318 (EKQT…TNAS). 2 disordered regions span residues 251–323 (PKAE…YTVK) and 367–408 (ATNT…SSSA). One can recognise a LysM 3 domain in the interval 318–361 (SSYTVKSGDTLGKIASTFGTTVSKIKALNGLTSDNLQVGDVLKV). Positions 405–523 (SSSASAIIAE…GQYLVGFGRV (119 aa)) constitute a NlpC/P60 domain. The Nucleophile role is filled by cysteine 435. The active-site Proton acceptor is the histidine 485. Asparagine 497 is an active-site residue.

This sequence belongs to the peptidase C40 family.

Its function is as follows. This major extracellular protein may be involved in the invasion of non-professional phagocytic cells by Listeria. This Listeria seeligeri protein is Probable endopeptidase p60 (iap).